The chain runs to 283 residues: MKKTLIALAIAASAASGMAHAWMTGDFNGSVDIGGSITADDYRQKWEWKVGTGLNGFGNVLNDLTNGGTKLTITVTGNKPILLGRTKEAFATPVTGGVDGIPHIAFTDYEGASVVLRNPDGETNKKGLAYFVLPMKNAEGTKVGSVKVNASYAGVLGRGGVTSADGELLSLFADGLSSIFYGGLPRGSELSAGSAAAARTKLFGSLSRNDILGQIQRVNANITSLVDVAGSYRENMEYTDGTVVSAAYALGIANGQTIEATFNQAVTTSTQWSAPLNVAITYY.

The first 21 residues, 1–21, serve as a signal peptide directing secretion; the sequence is MKKTLIALAIAASAASGMAHA.

This sequence belongs to the fimbrial K88 protein family. In terms of assembly, K88 fimbria, 0.1-1 micrometer in length and 7 nanometers in diameter, is composed of about 100 identical subunits.

It is found in the fimbrium. Functionally, K88 major fimbrial subunit. Fimbriae (also called pili), are polar filaments radiating from the surface of the bacterium to a length of 0.5-1.5 micrometers and numbering 100-300 per cell. They enable bacteria to colonize the epithelium of specific host organs. This chain is K88 fimbrial protein AC (faeG), found in Escherichia coli.